The primary structure comprises 236 residues: tRNA (guanine-N(1)-)-methyltransferase (236 aa).

Residues Gly116 and 136–141 (LGDFVL) contribute to the S-adenosyl-L-methionine site.

Belongs to the RNA methyltransferase TrmD family. In terms of assembly, homodimer.

The protein resides in the cytoplasm. The catalysed reaction is guanosine(37) in tRNA + S-adenosyl-L-methionine = N(1)-methylguanosine(37) in tRNA + S-adenosyl-L-homocysteine + H(+). In terms of biological role, specifically methylates guanosine-37 in various tRNAs. The sequence is that of tRNA (guanine-N(1)-)-methyltransferase from Thiobacillus denitrificans (strain ATCC 25259 / T1).